Consider the following 450-residue polypeptide: Enolase (450 aa).

Q173 contacts (2R)-2-phosphoglycerate. Catalysis depends on E215, which acts as the Proton donor. Mg(2+)-binding residues include D254, E308, and D335. Positions 360, 389, 390, and 411 each coordinate (2R)-2-phosphoglycerate. K360 functions as the Proton acceptor in the catalytic mechanism.

Belongs to the enolase family. Mg(2+) serves as cofactor.

Its subcellular location is the cytoplasm. The protein resides in the secreted. It localises to the cell surface. The enzyme catalyses (2R)-2-phosphoglycerate = phosphoenolpyruvate + H2O. It functions in the pathway carbohydrate degradation; glycolysis; pyruvate from D-glyceraldehyde 3-phosphate: step 4/5. In terms of biological role, catalyzes the reversible conversion of 2-phosphoglycerate (2-PG) into phosphoenolpyruvate (PEP). It is essential for the degradation of carbohydrates via glycolysis. This chain is Enolase, found in Malacoplasma penetrans (strain HF-2) (Mycoplasma penetrans).